The following is a 511-amino-acid chain: MIVSDDVVFEAKQISKLFPGVKALDGVDLTLRAGRLTTLLGENGAGKSTLMKILAGVQPPDEGELLVQGEPVHFTSPRDAQDHGIAMIHQELSLVPDLTVAENIFLGREPLRFETLIDYTELNRQANEWLKRLELDVSPTTPVRRLRVGQQQLVEIARALAGNVRILIMDEPTSAITERETEVLFRCIADLKKQGVAIVYITHRLEELEQIADDIVVMRDGCLIGTAEFGELSHDAMVRMMVGRDVKILSKQSSSNNQPVLRAEGISLSHPTRPGDYLVHEVDMHVCKGEVLGIFGLMGAGRTELLECLFGLHPTASTGQVSMHDRSVRLRNPADAISHGLALVPEDRKQDGLVLSMSVGENASLASLKHAERFGFIDRGREREHTRRFVERFRVKTPSLREKIINLSGGNQQKVILAKWLATGPAVLMLDEPTRGIDIHAKNEIYSLINELTADGLAVIMVSSELPEVMAVSDRILVMCEGRATQSFDRSEATEENILQAALPRRNSIPC.

ABC transporter domains are found at residues 9–245 (FEAK…VGRD) and 261–506 (LRAE…LPRR). 41–48 (GENGAGKS) contributes to the ATP binding site.

This sequence belongs to the ABC transporter superfamily. Ribose importer (TC 3.A.1.2.1) family. The complex is composed of an ATP-binding protein (RbsA), two transmembrane proteins (RbsC) and a solute-binding protein (RbsB).

It is found in the cell inner membrane. The catalysed reaction is D-ribose(out) + ATP + H2O = D-ribose(in) + ADP + phosphate + H(+). In terms of biological role, part of the ABC transporter complex RbsABC involved in ribose import. Responsible for energy coupling to the transport system. This Rhodopirellula baltica (strain DSM 10527 / NCIMB 13988 / SH1) protein is Ribose import ATP-binding protein RbsA.